The following is a 361-amino-acid chain: MVQPVFDAAVLSGRADIPSQFIWPEGESPTPDAAEELHVPLIDIGGMLSGDPAAAAEVTRLVGEACERHGFFQVVNHGIDAELLADAHRCVDNFFTMPLPEKQRALRHPGESCGYASSFTGRFASKLPWKETLSFRSCPSDPALVVDYIVATLGEDHRRLGEVYARYCSEMSRLSLEIMEVLGESLGVGRAHYRRFFEGNDSIMRLNYYPPCQRPLETLGTGPHCDPTSLTILHQDNVGGLQVHTEGRWRSIRPRADAFVVNIGDTFMALSNGRYKSCLHRAVVNSRVPRKSLAFFLCPEMDKVVAPPGTLVDAANPRAYPDFTWRSLLDFTQKHYRADMKTLEVFSSWIVQQQQPQPART.

Positions 199-299 constitute a Fe2OG dioxygenase domain; sequence GNDSIMRLNY…RKSLAFFLCP (101 aa). His224, Asp226, and His280 together coordinate Fe cation. Residue Arg290 is part of the active site.

The protein belongs to the iron/ascorbate-dependent oxidoreductase family. GA20OX subfamily. It depends on Fe cation as a cofactor. L-ascorbate is required as a cofactor. In terms of tissue distribution, expressed in nodes and the ear of the elongating stem.

The enzyme catalyses gibberellin A12 + 2 2-oxoglutarate + 3 O2 + H(+) = gibberellin A9 + 2 succinate + 3 CO2 + 2 H2O. It catalyses the reaction gibberellin A53 + 2 2-oxoglutarate + 3 O2 + H(+) = gibberellin A20 + 2 succinate + 3 CO2 + 2 H2O. Key oxidase enzyme in the biosynthesis of gibberellin that catalyzes the conversion of GA12 and GA53 to GA9 and GA20 respectively, via a three-step oxidation at C-20 of the GA skeleton. This is Gibberellin 20 oxidase 1-D (GA20ox1D) from Triticum aestivum (Wheat).